A 427-amino-acid polypeptide reads, in one-letter code: L-threonine dehydratase biosynthetic IlvA (427 aa).

Lys-63 carries the N6-(pyridoxal phosphate)lysine modification. Pyridoxal 5'-phosphate contacts are provided by residues Asn-90, 193–197, and Ser-319; that span reads GGGGC. The ACT-like domain occupies 343-417; it reads HYFLVDFPQK…TEMHVETLQP (75 aa).

The protein belongs to the serine/threonine dehydratase family. In terms of assembly, homotetramer. The cofactor is pyridoxal 5'-phosphate.

The enzyme catalyses L-threonine = 2-oxobutanoate + NH4(+). The protein operates within amino-acid biosynthesis; L-isoleucine biosynthesis; 2-oxobutanoate from L-threonine: step 1/1. In terms of biological role, catalyzes the anaerobic formation of alpha-ketobutyrate and ammonia from threonine in a two-step reaction. The first step involved a dehydration of threonine and a production of enamine intermediates (aminocrotonate), which tautomerizes to its imine form (iminobutyrate). Both intermediates are unstable and short-lived. The second step is the nonenzymatic hydrolysis of the enamine/imine intermediates to form 2-ketobutyrate and free ammonia. In the low water environment of the cell, the second step is accelerated by RidA. In Mycobacterium leprae (strain TN), this protein is L-threonine dehydratase biosynthetic IlvA (ilvA).